Reading from the N-terminus, the 818-residue chain is Serine/threonine-protein kinase PTK2/STK2 (818 aa).

Residues 28-39 (NSSSHTDNSSLL) show a composition bias toward polar residues. Disordered stretches follow at residues 28-100 (NSSS…GSVS) and 117-177 (NPYL…SHHF). T56 is modified (phosphothreonine). A compositionally biased stretch (low complexity) spans 57-81 (SPSISGSGSGGNSPSSSAGARQRSA). Phosphoserine is present on residues S59 and S80. A compositionally biased stretch (basic and acidic residues) spans 136-160 (TRDRDRAVLDREKEKERARNKERNT). The 308-residue stretch at 255-562 (DTDNKPIGSG…MDDLFNDPFF (308 aa)) folds into the Protein kinase domain. ATP contacts are provided by residues 261–269 (IGSGGSSEV) and K285. D388 functions as the Proton acceptor in the catalytic mechanism. Over residues 585 to 595 (STSTNDFSENS) the composition is skewed to polar residues. The tract at residues 585–795 (STSTNDFSEN…SVSSSKKKKV (211 aa)) is disordered. Phosphoserine is present on residues S623 and S632. Basic and acidic residues-rich tracts occupy residues 638-651 (KVKD…HDVG) and 659-685 (TKPK…KVIE). S694 carries the phosphoserine modification. The residue at position 700 (T700) is a Phosphothreonine. A Phosphoserine modification is found at S711. Residues 727 to 736 (TPTTPTHNGP) show a composition bias toward low complexity. T737 carries the phosphothreonine modification. S752, S755, S778, and S781 each carry phosphoserine. Positions 755-767 (SLKSETPASTKNF) are enriched in polar residues. Positions 768-789 (SAPNVSSSSNSLRSLGSPSVSS) are enriched in low complexity.

This sequence belongs to the protein kinase superfamily. Ser/Thr protein kinase family.

Its subcellular location is the nucleus. It localises to the cytoplasm. The catalysed reaction is L-seryl-[protein] + ATP = O-phospho-L-seryl-[protein] + ADP + H(+). It carries out the reaction L-threonyl-[protein] + ATP = O-phospho-L-threonyl-[protein] + ADP + H(+). Its function is as follows. Essential determinant for high-affinity spermidine transport. Required for the activation of the plasma membrane proton pump PMA1 via phosphorylation of 'Ser-899'. In Saccharomyces cerevisiae (strain ATCC 204508 / S288c) (Baker's yeast), this protein is Serine/threonine-protein kinase PTK2/STK2 (PTK2).